The sequence spans 624 residues: Sodium/potassium/calcium exchanger 3 (624 aa).

Residues 1–25 (RDLLLSQLCFLASVALLLWSLSSLR) form the signal peptide. Residues 26-88 (EQKELDLMDL…DIFSNEDRRQ (63 aa)) are Extracellular-facing. Asparagine 52 and asparagine 67 each carry an N-linked (GlcNAc...) asparagine glycan. The chain crosses the membrane as a helical span at residues 89–109 (GAVVLHVLCAMYMFYALAIVC). The Cytoplasmic portion of the chain corresponds to 110–133 (DDFFVPSLEKICERLHLSEDVAGA). The stretch at 130 to 170 (VAGATFMAAGSSAPELFTSVIGVFITKGDVGVGTIVGSAVF) is one Alpha-1 repeat. The helical transmembrane segment at 134–154 (TFMAAGSSAPELFTSVIGVFI) threads the bilayer. The Extracellular portion of the chain corresponds to 155–163 (TKGDVGVGT). Residues 164–184 (IVGSAVFNILCIIGVCGLFAG) traverse the membrane as a helical segment. Residues 185–191 (QVVALSS) are Cytoplasmic-facing. Residues 192–212 (WCLLRDSIYYTLSVVALIVFI) traverse the membrane as a helical segment. Over 213 to 215 (YDE) the chain is Extracellular. A helical membrane pass occupies residues 216–236 (KVSWWESLVLVLMYLIYIIIM). Residues 237-465 (KYNACIHQCF…WFMVTFASST (229 aa)) lie on the Cytoplasmic side of the membrane. Serine 289 is modified (phosphoserine). Acidic residues predominate over residues 386 to 414 (AEADNETENENEDENNENDEEEDEDDDEG). The interval 386–421 (AEADNETENENEDENNENDEEEDEDDDEGPYTPFDP) is disordered. Residues 466–486 (LWIAAFSYMMVWMVTIIGYTL) traverse the membrane as a helical segment. Over 487 to 491 (GIPDV) the chain is Extracellular. The helical transmembrane segment at 492 to 512 (IMGITFLAAGTSVPDCMASLI) threads the bilayer. The Alpha-2 repeat unit spans residues 499–530 (AAGTSVPDCMASLIVARQGMGDMAVSNSIGSN). Residues 513 to 530 (VARQGMGDMAVSNSIGSN) are Cytoplasmic-facing. The helical transmembrane segment at 531 to 551 (VFDILIGLGLPWALQTLAVDY) threads the bilayer. Topologically, residues 552–561 (GSYIRLNSRG) are extracellular. Residues 562-582 (LIYSVGLLLASVFVTVFGVHL) form a helical membrane-spanning segment. At 583 to 596 (NKWQLDKKLGCGCL) the chain is on the cytoplasmic side. Residues 597-617 (FLYGVFLCFSIMTEFNVFTFV) traverse the membrane as a helical segment. Residues 618-624 (NLPMCGD) lie on the Extracellular side of the membrane.

It belongs to the Ca(2+):cation antiporter (CaCA) (TC 2.A.19) family. SLC24A subfamily. In terms of tissue distribution, abundant in the brain. Expressed at low levels in the aorta, uterus and intestine.

Its subcellular location is the cell membrane. The enzyme catalyses Ca(2+)(out) + K(+)(out) + 4 Na(+)(in) = Ca(2+)(in) + K(+)(in) + 4 Na(+)(out). Calcium, potassium:sodium antiporter that transports 1 Ca(2+) and 1 K(+) in exchange for 4 Na(+). In Rattus norvegicus (Rat), this protein is Sodium/potassium/calcium exchanger 3 (Slc24a3).